Reading from the N-terminus, the 300-residue chain is Sulfate adenylyltransferase subunit 2 (300 aa).

The interval 281–300 is disordered; that stretch reads RAIDRDEAGSMEKKKREGYF.

The protein belongs to the PAPS reductase family. CysD subfamily. In terms of assembly, heterodimer composed of CysD, the smaller subunit, and CysN.

The enzyme catalyses sulfate + ATP + H(+) = adenosine 5'-phosphosulfate + diphosphate. The protein operates within sulfur metabolism; hydrogen sulfide biosynthesis; sulfite from sulfate: step 1/3. Its function is as follows. With CysN forms the ATP sulfurylase (ATPS) that catalyzes the adenylation of sulfate producing adenosine 5'-phosphosulfate (APS) and diphosphate, the first enzymatic step in sulfur assimilation pathway. APS synthesis involves the formation of a high-energy phosphoric-sulfuric acid anhydride bond driven by GTP hydrolysis by CysN coupled to ATP hydrolysis by CysD. The sequence is that of Sulfate adenylyltransferase subunit 2 from Brucella melitensis biotype 2 (strain ATCC 23457).